A 425-amino-acid polypeptide reads, in one-letter code: Serine--tRNA ligase (425 aa).

T231–E233 provides a ligand contact to L-serine. ATP-binding positions include R262 to E264 and V278. Position 285 (E285) interacts with L-serine. Position 349–352 (E349–S352) interacts with ATP. An L-serine-binding site is contributed by T384.

This sequence belongs to the class-II aminoacyl-tRNA synthetase family. Type-1 seryl-tRNA synthetase subfamily. Homodimer. The tRNA molecule binds across the dimer.

The protein resides in the cytoplasm. The catalysed reaction is tRNA(Ser) + L-serine + ATP = L-seryl-tRNA(Ser) + AMP + diphosphate + H(+). The enzyme catalyses tRNA(Sec) + L-serine + ATP = L-seryl-tRNA(Sec) + AMP + diphosphate + H(+). It participates in aminoacyl-tRNA biosynthesis; selenocysteinyl-tRNA(Sec) biosynthesis; L-seryl-tRNA(Sec) from L-serine and tRNA(Sec): step 1/1. Catalyzes the attachment of serine to tRNA(Ser). Is also able to aminoacylate tRNA(Sec) with serine, to form the misacylated tRNA L-seryl-tRNA(Sec), which will be further converted into selenocysteinyl-tRNA(Sec). This Dictyoglomus turgidum (strain DSM 6724 / Z-1310) protein is Serine--tRNA ligase.